The sequence spans 319 residues: Exopolyphosphatase 2 (319 aa).

It belongs to the GppA/Ppx family. Homodimer.

The catalysed reaction is [phosphate](n) + H2O = [phosphate](n-1) + phosphate + H(+). With respect to regulation, exopolyphosphatase activity is inhibited by ppGpp alarmones produced during the bacterial stringent response. Its function is as follows. Degradation of inorganic polyphosphates (polyP). Releases orthophosphate processively from the ends of the polyP chain. Prefers long-chain length polyphosphates as substrates. This is Exopolyphosphatase 2 from Mycobacterium tuberculosis (strain CDC 1551 / Oshkosh).